Consider the following 283-residue polypeptide: Putative sugar uptake protein BC_0219 (283 aa).

Helical transmembrane passes span 4–21 (LLAL…LVSV), 26–48 (GAYS…MYVF), 52–71 (ALTM…WALG), 84–106 (VSTT…GVIA), 110–132 (WTTT…GVVF), 151–173 (LLTL…WYNI), 178–195 (AILP…VLTS), 208–230 (ALSG…RVGV), 234–253 (FPLS…VFLG), and 260–279 (QLIF…VLLG).

The protein belongs to the GRP transporter (TC 2.A.7.5) family.

The protein resides in the cell membrane. In Bacillus cereus (strain ATCC 14579 / DSM 31 / CCUG 7414 / JCM 2152 / NBRC 15305 / NCIMB 9373 / NCTC 2599 / NRRL B-3711), this protein is Putative sugar uptake protein BC_0219.